The primary structure comprises 393 residues: Stearoyl-[acyl-carrier-protein] 9-desaturase, chloroplastic (393 aa).

The transit peptide at 1 to 31 (MASMVAFRPEAFLCFSPPKTTRSTRSPRISM) directs the protein to the chloroplast. Positions 135, 173, 176, 226, 259, and 262 each coordinate Fe cation.

It belongs to the fatty acid desaturase type 2 family. As to quaternary structure, homodimer. Requires Fe(2+) as cofactor.

The protein resides in the plastid. Its subcellular location is the chloroplast. It catalyses the reaction octadecanoyl-[ACP] + 2 reduced [2Fe-2S]-[ferredoxin] + O2 + 2 H(+) = (9Z)-octadecenoyl-[ACP] + 2 oxidized [2Fe-2S]-[ferredoxin] + 2 H2O. The protein operates within lipid metabolism; fatty acid metabolism. Functionally, converts stearoyl-ACP to oleoyl-ACP by introduction of a cis double bond between carbons 9 and 10 of the acyl chain. The chain is Stearoyl-[acyl-carrier-protein] 9-desaturase, chloroplastic from Elaeis guineensis var. tenera (Oil palm).